Here is a 160-residue protein sequence, read N- to C-terminus: Single-stranded DNA-binding protein (160 aa).

Functionally, binds to single-stranded DNA (ssDNA). Has a regulatory effect on phage DNA metabolism and transcription of early genes. The chain is Single-stranded DNA-binding protein (XII) from Enterobacteria phage PRD1 (Bacteriophage PRD1).